A 308-amino-acid polypeptide reads, in one-letter code: Glycine--tRNA ligase alpha subunit (308 aa).

This sequence belongs to the class-II aminoacyl-tRNA synthetase family. In terms of assembly, tetramer of two alpha and two beta subunits.

It localises to the cytoplasm. The enzyme catalyses tRNA(Gly) + glycine + ATP = glycyl-tRNA(Gly) + AMP + diphosphate. The protein is Glycine--tRNA ligase alpha subunit of Brevibacillus brevis (strain 47 / JCM 6285 / NBRC 100599).